Reading from the N-terminus, the 624-residue chain is Galactan 5-O-arabinofuranosyltransferase (624 aa).

Helical transmembrane passes span 5 to 25, 43 to 63, 73 to 93, 127 to 147, 159 to 179, 181 to 201, 203 to 223, 234 to 254, 280 to 300, 326 to 346, 355 to 375, 391 to 411, and 422 to 442; these read VLGQ…VAIA, ALTT…GLLW, LGAL…PLGA, IGLP…IAAA, WSIV…AAMI, FEYA…YAST, PYAA…WAGL, AIVG…LLLV, LAVI…PYLL, FPMF…VWLV, AGAL…SMLT, LTVL…LAIA, and VVAA…QDIP.

This sequence belongs to the glycosyltransferase 85 family.

It localises to the cell membrane. It catalyses the reaction Adds an alpha-D-arabinofuranosyl group from trans,octacis-decaprenylphospho-beta-D-arabinofuranose at the 5-O-position of the eighth, tenth and twelfth galactofuranose unit of the galactofuranan chain of [beta-D-galactofuranosyl-(1-&gt;5)-beta-D-galactofuranosyl-(1-&gt;6)]14-beta-D-galactofuranosyl-(1-&gt;5)-beta-D-galactofuranosyl-(1-&gt;4)-alpha-L-rhamnopyranosyl-(1-&gt;3)-N-acetyl-alpha-D-glucosaminyl-diphospho-trans,octacis-decaprenol.. It functions in the pathway cell wall biogenesis; cell wall polysaccharide biosynthesis. Its function is as follows. Involved in the biosynthesis of the arabinogalactan (AG) region of the mycolylarabinogalactan-peptidoglycan (mAGP) complex, an essential component of the mycobacterial cell wall. Catalyzes the addition of the first key arabinofuranosyl (Araf) residue from the sugar donor decaprenyl-phospho-arabinose (DPA) on the C-5 of a 6-linked galactofuranosyl (Galf) of the galactan domain, thus 'priming' the galactan for further elaboration by other arabinofuranosyltransferases. It is not able to add an Araf residue to a terminal Galf. The protein is Galactan 5-O-arabinofuranosyltransferase of Mycolicibacterium smegmatis (strain ATCC 700084 / mc(2)155) (Mycobacterium smegmatis).